The primary structure comprises 66 residues: MPKLKTKSGAKKRFKVTGTGKVMHAQRGKRHGMIKRTKKQIRQLRGTRVLFKTDGDNVKKYFLPNA.

Composition is skewed to basic residues over residues 1–15 (MPKL…KRFK) and 24–40 (HAQR…TKKQ). A disordered region spans residues 1-40 (MPKLKTKSGAKKRFKVTGTGKVMHAQRGKRHGMIKRTKKQ).

This sequence belongs to the bacterial ribosomal protein bL35 family.

The chain is Large ribosomal subunit protein bL35 from Bradyrhizobium sp. (strain ORS 278).